A 335-amino-acid polypeptide reads, in one-letter code: Glycerol-3-phosphate dehydrogenase [NAD(P)+] (335 aa).

Positions 10, 11, 31, and 105 each coordinate NADPH. The sn-glycerol 3-phosphate site is built by Lys105, Gly136, and Ser138. Ala140 contacts NADPH. Residues Lys191, Asp244, Ser254, Arg255, and Asn256 each contribute to the sn-glycerol 3-phosphate site. Lys191 serves as the catalytic Proton acceptor. Arg255 is a binding site for NADPH. 2 residues coordinate NADPH: Val279 and Glu281.

This sequence belongs to the NAD-dependent glycerol-3-phosphate dehydrogenase family.

It is found in the cytoplasm. The enzyme catalyses sn-glycerol 3-phosphate + NAD(+) = dihydroxyacetone phosphate + NADH + H(+). The catalysed reaction is sn-glycerol 3-phosphate + NADP(+) = dihydroxyacetone phosphate + NADPH + H(+). Its pathway is membrane lipid metabolism; glycerophospholipid metabolism. Catalyzes the reduction of the glycolytic intermediate dihydroxyacetone phosphate (DHAP) to sn-glycerol 3-phosphate (G3P), the key precursor for phospholipid synthesis. In Leptospira borgpetersenii serovar Hardjo-bovis (strain JB197), this protein is Glycerol-3-phosphate dehydrogenase [NAD(P)+].